A 304-amino-acid polypeptide reads, in one-letter code: Non-specific ribonucleoside hydrolase RihC (304 aa).

Histidine 233 is a catalytic residue.

This sequence belongs to the IUNH family. RihC subfamily.

In terms of biological role, hydrolyzes both purine and pyrimidine ribonucleosides with a broad-substrate specificity. This is Non-specific ribonucleoside hydrolase RihC from Shigella boydii serotype 4 (strain Sb227).